The primary structure comprises 62 residues: MARVCTITGRKARSGNSRSHAMNATKRKWGANLQKVRVRIDGKVQRVYVSARALKSGKIERV.

The interval 1 to 28 is disordered; the sequence is MARVCTITGRKARSGNSRSHAMNATKRK.

The protein belongs to the bacterial ribosomal protein bL28 family.

The protein is Large ribosomal subunit protein bL28 of Bacillus anthracis (strain CDC 684 / NRRL 3495).